Reading from the N-terminus, the 210-residue chain is Phosphoheptose isomerase (210 aa).

An SIS domain is found at 38 to 202 (IAACLARGGK…ENVAALAPYL (165 aa)). 53 to 55 (NGG) serves as a coordination point for substrate. Zn(2+) contacts are provided by His62 and Glu66. Substrate is bound by residues Glu66, 95–96 (ND), 121–123 (STS), Ser126, and Gln173. The Zn(2+) site is built by Gln173 and His181.

This sequence belongs to the SIS family. GmhA subfamily. In terms of assembly, homotetramer. The cofactor is Zn(2+).

It is found in the cytoplasm. The catalysed reaction is 2 D-sedoheptulose 7-phosphate = D-glycero-alpha-D-manno-heptose 7-phosphate + D-glycero-beta-D-manno-heptose 7-phosphate. It functions in the pathway carbohydrate biosynthesis; D-glycero-D-manno-heptose 7-phosphate biosynthesis; D-glycero-alpha-D-manno-heptose 7-phosphate and D-glycero-beta-D-manno-heptose 7-phosphate from sedoheptulose 7-phosphate: step 1/1. Functionally, catalyzes the isomerization of sedoheptulose 7-phosphate in D-glycero-D-manno-heptose 7-phosphate. In Desulfovibrio desulfuricans (strain ATCC 27774 / DSM 6949 / MB), this protein is Phosphoheptose isomerase.